A 91-amino-acid chain; its full sequence is Small ribosomal subunit protein bS16 (91 aa).

It belongs to the bacterial ribosomal protein bS16 family.

This Staphylococcus aureus (strain Mu3 / ATCC 700698) protein is Small ribosomal subunit protein bS16.